We begin with the raw amino-acid sequence, 693 residues long: Elongation factor G 1 (693 aa).

In terms of domain architecture, tr-type G spans 4-281; it reads NKLRNIGISA…AVTRFLPSPH (278 aa). Residues 13–20, 80–84, and 134–137 contribute to the GTP site; these read AHIDSGKT, DTPGH, and NKCD.

This sequence belongs to the TRAFAC class translation factor GTPase superfamily. Classic translation factor GTPase family. EF-G/EF-2 subfamily.

It is found in the cytoplasm. Functionally, catalyzes the GTP-dependent ribosomal translocation step during translation elongation. During this step, the ribosome changes from the pre-translocational (PRE) to the post-translocational (POST) state as the newly formed A-site-bound peptidyl-tRNA and P-site-bound deacylated tRNA move to the P and E sites, respectively. Catalyzes the coordinated movement of the two tRNA molecules, the mRNA and conformational changes in the ribosome. This is Elongation factor G 1 from Borrelia garinii subsp. bavariensis (strain ATCC BAA-2496 / DSM 23469 / PBi) (Borreliella bavariensis).